Here is a 461-residue protein sequence, read N- to C-terminus: MTQDYETVLKGKYPAKEHALRVADYVKSKVPDATGILYVEGRMTKMLEDNDEPEPFRQRRYFYYLTGCPLADCHYIFDLATSKSTLFIPPIDPDSVIWSGLPVSAAEAKELYDVDEVKYTTDVNAELARLGKGPKKTVFAIQNQVLDSITFLEFDEKNFSILKDAIERCRVVKDDYEIALTRKANAVSTVAHHAVVEYVKKAKNERELEALFLQRSVANGAKNQAYHGIFAGGRAAATLHYVANDAPLEGKLNLLLDAGTEWNCYASDITRTFPISGKFSKESRQIYDIVLKMQLETTAALKEGVIWDEIHLLAHKIAIDGLHLIGILKGDKDEILKNRTSVAFFPHGLGHYLGMDTHDVGGNANYADRDPMFRYLRVRGALPAGSIVTVEPGIYFCSFIIEPYLKDPVHSKFIDSAVLEKYWDVGGVRIEDNILITKDGSENLTPTIKDPDELEKIIQAS.

Residues Asp-257, Asp-268, Glu-391, and Glu-431 each contribute to the Mn(2+) site.

The protein belongs to the peptidase M24B family. The cofactor is Mn(2+).

The enzyme catalyses Release of any N-terminal amino acid, including proline, that is linked to proline, even from a dipeptide or tripeptide.. Catalyzes the removal of a penultimate prolyl residue from the N-termini of peptides. This Colletotrichum graminicola (strain M1.001 / M2 / FGSC 10212) (Maize anthracnose fungus) protein is Probable Xaa-Pro aminopeptidase PEPP (PEPP).